The primary structure comprises 499 residues: Anaerobic magnesium-protoporphyrin IX monomethyl ester cyclase (499 aa).

Residues 9–145 (PHPAIGSRIP…AALENHNDLN (137 aa)) enclose the B12-binding domain. In terms of domain architecture, Radical SAM core spans 188–420 (YGGKQAVVIQ…PPWRIFLWVK (233 aa)). Residues Cys202, Cys206, and Cys209 each coordinate [4Fe-4S] cluster.

Belongs to the BchE family. Requires [4Fe-4S] cluster as cofactor. Adenosylcob(III)alamin serves as cofactor.

It catalyses the reaction Mg-protoporphyrin IX 13-monomethyl ester + 3 S-adenosyl-L-methionine + H2O = 3,8-divinyl protochlorophyllide a + 3 5'-deoxyadenosine + 3 L-methionine + 4 H(+). Its pathway is porphyrin-containing compound metabolism; bacteriochlorophyll biosynthesis (light-independent). In terms of biological role, involved in the tetrapyrrole biosynthetic pathways leading to chlorophyll and bacteriochlorophyll (BChl). Catalyzes the anaerobic formation of the isocyclic ring (E-ring) in Mg-protoporphyrin monomethyl ester (MPE) to yield protochlorophyllide a (PChlide a) via a six-electron oxidation and the formation of an oxo group at position C13 using oxygen from a water molecule. This is Anaerobic magnesium-protoporphyrin IX monomethyl ester cyclase from Synechocystis sp. (strain ATCC 27184 / PCC 6803 / Kazusa).